A 687-amino-acid chain; its full sequence is Tripartite terminase subunit 3 (687 aa).

Residues 67-91 are disordered; sequence HHPATPTSANPDVGTPRPSEDNVPA. The short motif at 221–228 is the Walker A motif element; sequence IPRRHGKT. The Walker B motif motif lies at 316-321; the sequence is LLYVDE. The active-site For ATPase activity is Glu321. Residues Asp476, Glu550, and Asp662 each act as for nuclease activity in the active site.

Belongs to the herpesviridae TRM3 protein family. As to quaternary structure, interacts with the terminase subunits TRM1 and TRM2. Interacts with portal protein.

It is found in the host nucleus. In terms of biological role, component of the molecular motor that translocates viral genomic DNA in empty capsid during DNA packaging. Forms a tripartite terminase complex together with TRM1 and TRM2 in the host cytoplasm. Once the complex reaches the host nucleus, it interacts with the capsid portal vertex. This portal forms a ring in which genomic DNA is translocated into the capsid. TRM3 carries an RNase H-like nuclease activity that plays an important role for the cleavage of concatemeric viral DNA into unit length genomes. The protein is Tripartite terminase subunit 3 of Human herpesvirus 8 type P (isolate GK18) (HHV-8).